The following is a 145-amino-acid chain: 3-dehydroquinate dehydratase (145 aa).

Tyrosine 23 functions as the Proton acceptor in the catalytic mechanism. Residues asparagine 75, histidine 81, and aspartate 88 each contribute to the substrate site. The Proton donor role is filled by histidine 101. Residues 102–103 and arginine 112 each bind substrate; that span reads LS.

This sequence belongs to the type-II 3-dehydroquinase family. Homododecamer.

The enzyme catalyses 3-dehydroquinate = 3-dehydroshikimate + H2O. Its pathway is metabolic intermediate biosynthesis; chorismate biosynthesis; chorismate from D-erythrose 4-phosphate and phosphoenolpyruvate: step 3/7. In terms of biological role, catalyzes a trans-dehydration via an enolate intermediate. In Legionella pneumophila (strain Lens), this protein is 3-dehydroquinate dehydratase.